The sequence spans 311 residues: Zeta-sarcoglycan (311 aa).

Residues 1–50 (MDRSTDLDIQELKMTREQYILATQQNNLPRPENAQLYPVGIYGWRKRCLY) lie on the Cytoplasmic side of the membrane. The chain crosses the membrane as a helical; Signal-anchor for type II membrane protein span at residues 51 to 71 (FFVLLLLVTMIVNLAMTIWIL). Residues 72 to 311 (KVMNFTVDGM…QSSSSICLWN (240 aa)) lie on the Extracellular side of the membrane. N-linked (GlcNAc...) asparagine glycosylation is found at Asn75 and Asn123. Cys285 and Cys301 form a disulfide bridge.

It belongs to the sarcoglycan beta/delta/gamma/zeta family. As to expression, expressed in the heart, skeletal muscle and arterial vascular smooth muscle.

It localises to the cell membrane. The protein resides in the sarcolemma. It is found in the cytoplasm. The protein localises to the cytoskeleton. Component of the sarcoglycan complex, a subcomplex of the dystrophin-glycoprotein complex which forms a link between the F-actin cytoskeleton and the extracellular matrix. May play a role in the maintenance of striated muscle membrane stability. The chain is Zeta-sarcoglycan (Sgcz) from Mus musculus (Mouse).